We begin with the raw amino-acid sequence, 84 residues long: Cell division protein CrgA (84 aa).

2 helical membrane passes run 31 to 51 (VAPVMLAMFLIGLAWIVVFYV) and 60 to 80 (ALDNWNIVVGFGFIAAGFGVS).

It belongs to the CrgA family.

The protein resides in the cell membrane. Its function is as follows. Involved in cell division. Coordinates growth and cell division. Required for the formation of the sporulation septa. In Streptomyces avermitilis (strain ATCC 31267 / DSM 46492 / JCM 5070 / NBRC 14893 / NCIMB 12804 / NRRL 8165 / MA-4680), this protein is Cell division protein CrgA.